The following is a 548-amino-acid chain: Chaperonin GroEL 1 (548 aa).

Residues 30–33 (TLGP), K51, 87–91 (DGTTT), G415, 479–481 (NAA), and D495 contribute to the ATP site.

This sequence belongs to the chaperonin (HSP60) family. Forms a cylinder of 14 subunits composed of two heptameric rings stacked back-to-back. Interacts with the co-chaperonin GroES.

It localises to the cytoplasm. It carries out the reaction ATP + H2O + a folded polypeptide = ADP + phosphate + an unfolded polypeptide.. Together with its co-chaperonin GroES, plays an essential role in assisting protein folding. The GroEL-GroES system forms a nano-cage that allows encapsulation of the non-native substrate proteins and provides a physical environment optimized to promote and accelerate protein folding. This is Chaperonin GroEL 1 from Escherichia coli O1:K1 / APEC.